A 169-amino-acid polypeptide reads, in one-letter code: Ribosome maturation factor RimM (169 aa).

The PRC barrel domain occupies 96–166 (EDEFYFADLI…AVVVRPVEVE (71 aa)).

The protein belongs to the RimM family. As to quaternary structure, binds ribosomal protein uS19.

It localises to the cytoplasm. An accessory protein needed during the final step in the assembly of 30S ribosomal subunit, possibly for assembly of the head region. Essential for efficient processing of 16S rRNA. May be needed both before and after RbfA during the maturation of 16S rRNA. It has affinity for free ribosomal 30S subunits but not for 70S ribosomes. This chain is Ribosome maturation factor RimM, found in Acidiphilium cryptum (strain JF-5).